A 558-amino-acid chain; its full sequence is Kelch-like protein 23 (558 aa).

A BTB domain is found at 36-104 (TDITLQCPSG…AYTSQIEITK (69 aa)). The BACK domain maps to 139–240 (CIGMHSFAEF…DPVYLKTALG (102 aa)). 6 Kelch repeats span residues 274 to 320 (TMYI…CLGP), 321 to 369 (NIYV…TLGG), 370 to 416 (CVYA…VLHD), 418 to 466 (IYVI…PFEN), 467 to 508 (KLYL…IMNG), and 510 to 557 (IYVT…CVYN).

In Homo sapiens (Human), this protein is Kelch-like protein 23 (KLHL23).